A 101-amino-acid polypeptide reads, in one-letter code: MDISKLTDVKKVDLCKKYFLIGACFLPLVWIVNTFWFFSDAFCKPINAHRRQIRKYVIASIVGSIFWIIVLSAWEIFFQHYRAQGLVWTDFLTFVFPTGRV.

Over 1–17 the chain is Lumenal; sequence MDISKLTDVKKVDLCKK. The helical transmembrane segment at 18–38 threads the bilayer; that stretch reads YFLIGACFLPLVWIVNTFWFF. The Cytoplasmic portion of the chain corresponds to 39-57; that stretch reads SDAFCKPINAHRRQIRKYV. The helical transmembrane segment at 58-78 threads the bilayer; sequence IASIVGSIFWIIVLSAWEIFF. Topologically, residues 79 to 101 are lumenal; sequence QHYRAQGLVWTDFLTFVFPTGRV.

This sequence belongs to the PEN-2 family. In terms of assembly, component of the gamma-secretase complex, a complex probably composed of the presenilin homodimer (sel-12, hop-1 or spe-4), nicastrin (aph-2), aph-1 and pen-2. In terms of tissue distribution, expressed from 100-cell stage in most somatic tissues, including neurons, muscle, intestine and developing vulva. Little or not expressed in early embryos.

It localises to the endoplasmic reticulum membrane. It is found in the golgi apparatus membrane. Functionally, essential subunit of the gamma-secretase complex, an endoprotease complex that catalyzes the intramembrane cleavage of integral membrane proteins such as Notch (glp-1 or lin-12). It may represent a stabilizing cofactor for the presenilin homodimer that promotes the formation of a stable complex. In Caenorhabditis elegans, this protein is Gamma-secretase subunit pen-2 (pen-2).